A 651-amino-acid polypeptide reads, in one-letter code: 120 kDa Glycoprotein O (651 aa).

The signal sequence occupies residues 1 to 56; the sequence is MHLEVIVQSYKKSKYYFSHTFYLYKFIVVNSPDMLHISQLGLFLGLFAIVMHSANL. N-linked (GlcNAc...) asparagine; by host glycosylation is found at N74, N97, N147, N208, N223, N234, and N254. Low complexity predominate over residues 275 to 292; that stretch reads SSTSASLTSPHIPSTNIP. The segment at 275-303 is disordered; that stretch reads SSTSASLTSPHIPSTNIPTPEPPPVTKNS. N-linked (GlcNAc...) asparagine; by host glycans are attached at residues N302, N355, N378, N395, N469, N502, N520, N546, N603, N620, and N631.

Belongs to the herpesviridae U47 family. In terms of assembly, part of a gH-gL-gO complex. A shorter mature protein, gO-80K, is produced probably by proteolytic cleavage. Post-translationally, modified with high mannose-oligosaccharides. In terms of processing, N-glycosylated with complex glycans.

Its subcellular location is the virion. It is found in the host cell membrane. The polypeptide is 120 kDa Glycoprotein O (U47) (Homo sapiens (Human)).